Consider the following 534-residue polypeptide: NAD(P)H-quinone oxidoreductase chain 4 2 (534 aa).

A run of 14 helical transmembrane segments spans residues 9–29, 51–71, 106–126, 130–150, 152–172, 184–204, 227–247, 258–278, 290–310, 326–346, 347–367, 399–419, 432–452, and 479–499; these read FPWLTTVIAYPVLAALFIPLI, WFALFIAVTDLLILLAGFYVG, LILLTAFITTLAILAAWPVTL, LFYFLMLAMYGGQIGVFAVQD, LLFFLMWELELIPVYLLLSIW, FILYTALSSLFILVAGLAMAF, LLMYGAFLIAYGVKLPIFPLH, TAPVHMLLAGILLKMGGYALM, LYFAPVLIVLGVVNIIFAALT, ISHMGFVLIGIGSLTEIGMSG, AMLQMISHGLIGASLFFLVGA, LASLALPGMSGFVAEIMVFIG, LVVVFLAAVGVILTPIYLLSM, and VFIIACLLIPIIGIGLYPKLV.

This sequence belongs to the complex I subunit 4 family.

The protein resides in the cellular thylakoid membrane. The catalysed reaction is a plastoquinone + NADH + (n+1) H(+)(in) = a plastoquinol + NAD(+) + n H(+)(out). It catalyses the reaction a plastoquinone + NADPH + (n+1) H(+)(in) = a plastoquinol + NADP(+) + n H(+)(out). In terms of biological role, NDH-1 shuttles electrons from NAD(P)H, via FMN and iron-sulfur (Fe-S) centers, to quinones in the respiratory chain. The immediate electron acceptor for the enzyme in this species is believed to be plastoquinone. Couples the redox reaction to proton translocation (for every two electrons transferred, four hydrogen ions are translocated across the cytoplasmic membrane), and thus conserves the redox energy in a proton gradient. This chain is NAD(P)H-quinone oxidoreductase chain 4 2, found in Synechococcus sp. (strain JA-2-3B'a(2-13)) (Cyanobacteria bacterium Yellowstone B-Prime).